Consider the following 490-residue polypeptide: Betaine aldehyde dehydrogenase (490 aa).

Residues Ile27 and Asp93 each coordinate K(+). An NAD(+)-binding site is contributed by 150 to 152; the sequence is GAW. The Charge relay system role is filled by Lys162. 176 to 179 lines the NAD(+) pocket; it reads KPSE. Val180 contributes to the K(+) binding site. 230–233 serves as a coordination point for NAD(+); that stretch reads GTDT. K(+) is bound at residue Leu246. Catalysis depends on Glu252, which acts as the Proton acceptor. NAD(+) contacts are provided by Gly254, Cys286, and Glu387. The active-site Nucleophile is Cys286. At Cys286 the chain carries Cysteine sulfenic acid (-SOH). Positions 457 and 460 each coordinate K(+). Glu464 functions as the Charge relay system in the catalytic mechanism.

This sequence belongs to the aldehyde dehydrogenase family. Dimer of dimers. K(+) is required as a cofactor.

The enzyme catalyses betaine aldehyde + NAD(+) + H2O = glycine betaine + NADH + 2 H(+). It participates in amine and polyamine biosynthesis; betaine biosynthesis via choline pathway; betaine from betaine aldehyde: step 1/1. In terms of biological role, involved in the biosynthesis of the osmoprotectant glycine betaine. Catalyzes the irreversible oxidation of betaine aldehyde to the corresponding acid. The chain is Betaine aldehyde dehydrogenase from Pseudomonas fluorescens (strain SBW25).